We begin with the raw amino-acid sequence, 121 residues long: Small ribosomal subunit protein uS13 (121 aa).

The disordered stretch occupies residues 97–121; the sequence is VRGQRTRTNARTRRGARKTVAGKKK. The segment covering 100-121 has biased composition (basic residues); sequence QRTRTNARTRRGARKTVAGKKK.

The protein belongs to the universal ribosomal protein uS13 family. Part of the 30S ribosomal subunit. Forms a loose heterodimer with protein S19. Forms two bridges to the 50S subunit in the 70S ribosome.

Its function is as follows. Located at the top of the head of the 30S subunit, it contacts several helices of the 16S rRNA. In the 70S ribosome it contacts the 23S rRNA (bridge B1a) and protein L5 of the 50S subunit (bridge B1b), connecting the 2 subunits; these bridges are implicated in subunit movement. Contacts the tRNAs in the A and P-sites. This is Small ribosomal subunit protein uS13 from Synechococcus sp. (strain CC9902).